The chain runs to 878 residues: Phosphoenolpyruvate carboxylase (878 aa).

Catalysis depends on residues His140 and Lys545.

This sequence belongs to the PEPCase type 1 family. Requires Mg(2+) as cofactor.

The enzyme catalyses oxaloacetate + phosphate = phosphoenolpyruvate + hydrogencarbonate. Forms oxaloacetate, a four-carbon dicarboxylic acid source for the tricarboxylic acid cycle. This is Phosphoenolpyruvate carboxylase from Pseudomonas syringae pv. syringae (strain B728a).